The primary structure comprises 600 residues: MKLGFYLLGGDFMRLAIIDYDRCQPKKCSMECMKYCPGVRMGEKTIEIDENTGKPVISEVLCSGCGICVKRCPFKAISIIGLPEELSEDKIVHSYGQNRFKLFGLVIPRDGVVGIIGQNGIGKSTVLRILAGELIPNLGKHDKEPNYDDVIKYFRGTELQEYFEKLKNKGVKAIHKVQYVDILPKVVKGKVGDLLKKVDEKGKFDEVVEKLELKNILDRELSQLSGGELQRVAIAAAYLRNGDIYFFDEPSSWLDIRQRFNAARLIRELNKVVVVEHDLIVLDYLSDYIHIMYGVPSAYGIVSMPKSVRVGINEYLYGELREENIRFRKEPIIFEKRAVIDFKNRPILLSYSSMKKTLGDFKLEVSGGTIYKGEVIGILGPNGIGKTTFVKLLAGVIKPDEGEVIKEGDIKVSYKPQYITPDYDGTVEDLLSSITNIHTSYYKSEIINPLQLEKLLDREVRELSGGELQRVAIAACLSRDADIYLLDEPSAFLDVEQRLRVSKVIRRIADEKEAGMFVVDHDILFQDYISDRFIVFSGEPGKFGVGSSPMNKRDGANKFLKEMQITFRRDPETGRPRANKEGSQRDIMQKEKGEYYYVDE.

4Fe-4S ferredoxin-type domains follow at residues 14-44 (RLAI…MGEK) and 53-82 (GKPV…IIGL). ABC transporter domains follow at residues 77–318 (ISII…YLYG) and 348–563 (LLSY…LKEM). Residues 117 to 124 (GQNGIGKS) and 380 to 387 (GPNGIGKT) contribute to the ATP site. The span at 569–594 (RDPETGRPRANKEGSQRDIMQKEKGE) shows a compositional bias: basic and acidic residues. The disordered stretch occupies residues 569 to 600 (RDPETGRPRANKEGSQRDIMQKEKGEYYYVDE).

Belongs to the ABC transporter superfamily.

This is an uncharacterized protein from Methanocaldococcus jannaschii (strain ATCC 43067 / DSM 2661 / JAL-1 / JCM 10045 / NBRC 100440) (Methanococcus jannaschii).